The sequence spans 610 residues: DNA mismatch repair protein MutL (610 aa).

Belongs to the DNA mismatch repair MutL/HexB family.

In terms of biological role, this protein is involved in the repair of mismatches in DNA. It is required for dam-dependent methyl-directed DNA mismatch repair. May act as a 'molecular matchmaker', a protein that promotes the formation of a stable complex between two or more DNA-binding proteins in an ATP-dependent manner without itself being part of a final effector complex. The polypeptide is DNA mismatch repair protein MutL (Rickettsia canadensis (strain McKiel)).